A 362-amino-acid chain; its full sequence is GTPase Obg (362 aa).

In terms of domain architecture, Obg spans 1–159 (MKFLDEAKVY…KTIWLRLKLI (159 aa)). Positions 160–327 (ADAGLVGLPN…VLRALRDVIV (168 aa)) constitute an OBG-type G domain. GTP contacts are provided by residues 166–173 (GLPNAGKS), 191–195 (FTTLH), 212–215 (DIPG), 279–282 (SQID), and 308–310 (SAV). Residues serine 173 and threonine 193 each contribute to the Mg(2+) site. The interval 332–362 (EEKPAKVPKLRHRDMIVSDEGEGEDGADDQP) is disordered. Residues 348-362 (VSDEGEGEDGADDQP) show a composition bias toward acidic residues.

It belongs to the TRAFAC class OBG-HflX-like GTPase superfamily. OBG GTPase family. Monomer. Mg(2+) serves as cofactor.

It is found in the cytoplasm. An essential GTPase which binds GTP, GDP and possibly (p)ppGpp with moderate affinity, with high nucleotide exchange rates and a fairly low GTP hydrolysis rate. Plays a role in control of the cell cycle, stress response, ribosome biogenesis and in those bacteria that undergo differentiation, in morphogenesis control. The chain is GTPase Obg from Rhizobium etli (strain CIAT 652).